The sequence spans 61 residues: Photosystem II reaction center protein K (61 aa).

A propeptide spanning residues 1 to 24 is cleaved from the precursor; that stretch reads MLNIFNLVCICIHSVLYSSSFFSA. The chain crosses the membrane as a helical span at residues 36–56; that stretch reads IVDIMPVIPLLFFLLAFVWQA.

Belongs to the PsbK family. In terms of assembly, PSII is composed of 1 copy each of membrane proteins PsbA, PsbB, PsbC, PsbD, PsbE, PsbF, PsbH, PsbI, PsbJ, PsbK, PsbL, PsbM, PsbT, PsbX, PsbY, PsbZ, Psb30/Ycf12, at least 3 peripheral proteins of the oxygen-evolving complex and a large number of cofactors. It forms dimeric complexes.

The protein resides in the plastid. The protein localises to the chloroplast thylakoid membrane. Its function is as follows. One of the components of the core complex of photosystem II (PSII). PSII is a light-driven water:plastoquinone oxidoreductase that uses light energy to abstract electrons from H(2)O, generating O(2) and a proton gradient subsequently used for ATP formation. It consists of a core antenna complex that captures photons, and an electron transfer chain that converts photonic excitation into a charge separation. The polypeptide is Photosystem II reaction center protein K (Glycine max (Soybean)).